The following is a 229-amino-acid chain: Protein fmp52-2, mitochondrial (229 aa).

The N-terminal 45 residues, 1–45, are a transit peptide targeting the mitochondrion; the sequence is MTTAAVFGSTGAVGGQILATLLASDAFSSVKTVSRRLPNAQSPKL.

This sequence belongs to the FMP52 family.

It is found in the mitochondrion outer membrane. The polypeptide is Protein fmp52-2, mitochondrial (fmp522) (Aspergillus oryzae (strain ATCC 42149 / RIB 40) (Yellow koji mold)).